Here is a 408-residue protein sequence, read N- to C-terminus: Phosphoglycerate kinase (408 aa).

Substrate-binding positions include 24–26 (DIN), Arg40, 63–66 (HQGR), Arg120, and Arg160. ATP contacts are provided by residues Glu331 and 357–360 (GGHM).

It belongs to the phosphoglycerate kinase family.

The protein resides in the cytoplasm. It catalyses the reaction (2R)-3-phosphoglycerate + ATP = (2R)-3-phospho-glyceroyl phosphate + ADP. The protein operates within carbohydrate degradation; glycolysis; pyruvate from D-glyceraldehyde 3-phosphate: step 2/5. The protein is Phosphoglycerate kinase (pgk) of Saccharolobus solfataricus (strain ATCC 35092 / DSM 1617 / JCM 11322 / P2) (Sulfolobus solfataricus).